The following is a 599-amino-acid chain: Elongation factor 4 (599 aa).

The 183-residue stretch at 2–184 (KHIRNFSIIA…RLVRDIPPPE (183 aa)) folds into the tr-type G domain. GTP-binding positions include 14–19 (DHGKST) and 131–134 (NKID).

It belongs to the TRAFAC class translation factor GTPase superfamily. Classic translation factor GTPase family. LepA subfamily.

It is found in the cell inner membrane. The enzyme catalyses GTP + H2O = GDP + phosphate + H(+). Required for accurate and efficient protein synthesis under certain stress conditions. May act as a fidelity factor of the translation reaction, by catalyzing a one-codon backward translocation of tRNAs on improperly translocated ribosomes. Back-translocation proceeds from a post-translocation (POST) complex to a pre-translocation (PRE) complex, thus giving elongation factor G a second chance to translocate the tRNAs correctly. Binds to ribosomes in a GTP-dependent manner. This is Elongation factor 4 from Pectobacterium carotovorum subsp. carotovorum (strain PC1).